A 698-amino-acid chain; its full sequence is Protein CRAC (698 aa).

The PH domain maps to 22–122 (DVSYSSIMKK…FLTLLIARIR (101 aa)). The disordered stretch occupies residues 594-630 (TGGGSVPSSQSTNNLQSSTSSMSSLSSSSTSTTKRSH). Residues 601-626 (SSQSTNNLQSSTSSMSSLSSSSTSTT) are compositionally biased toward low complexity.

It localises to the cytoplasm. Couples activated G protein to adenylyl cyclase signal transduction from surface cAMP receptor. Pianissimo a cytosolic regulator and CRAC, are both essential for activation of the enzyme adenylyl cyclase. Pianissimo and CRAC do not function redundantly. Both proteins are integral components of the adenylyl cyclase activation pathway. The chain is Protein CRAC (dagA) from Dictyostelium discoideum (Social amoeba).